The chain runs to 777 residues: Shutoff protein (777 aa).

2 disordered regions span residues 1–55 and 261–283; these read MEED…SVPV and PLDS…DDDL. The segment covering 9-20 has biased composition (polar residues); it reads QPDSETLTSPTS. The tract at residues 250–314 is binding to host EIF4G; the sequence is VMDHLLIKRV…VILVTVELEC (65 aa). In terms of domain architecture, RRM spans 317–435; the sequence is RFFANPQTLR…ELWTAFSERT (119 aa). Tyr-334 and Tyr-649 each carry phosphotyrosine; by host. Positions 652 to 777 are disordered; the sequence is PQTGEELNTP…AAARLVESQP (126 aa). Over residues 656–665 the composition is skewed to polar residues; it reads EELNTPSPSA. The span at 728–738 shows a compositional bias: gly residues; the sequence is GAGGQTPQGRG. Residues 753–763 are compositionally biased toward basic and acidic residues; it reads TRSEPASDGES.

This sequence belongs to the adenoviridae shutoff protein family. As to quaternary structure, monomer. Interacts with hexon protein; this interaction allows chaperoning and trimerization of hexon proteins. Interacts (via N-terminus) with host initiation factor EIF4G (via C-terminus). Interacts (via RRM domain) with viral mRNAs that contain the tripartite leader; this interaction allows ribosome shunting and expression of viral late mRNAs. Post-translationally, might be cleaved by the viral protease. In terms of processing, phosphorylated. Tyrosine phosphorylation enhances preferential binding to tripartite leader mRNAs and allows ribosome shunting. Methylated. Asymmetric dimethylation by host PRMT1 of the Arg/Gly-rich region may regulate shutoff protein binding to hexon and promote the capsid assembly in the nucleus.

The protein localises to the host cytoplasm. Functionally, protein that inhibits host translation while promoting late viral translation by ribosome shunting. Blocks host cap-dependent translation by binding to eIF4G, displacing MKNK1 from cap initiation complexes and preventing EIF4E phosphorylation. Binds to the tripartite leader sequence of viral late mRNAs and recruits host eIF4G, PABPC1/poly-A binding protein and 40S ribosomes subunits on viral mRNAs, allowing ribosome shunting and efficient translation of late viral mRNAs even though conventional translation via ribosome scanning from the cap has been shut off in the host cell. During assembly, acts as a chaperone protein that helps hexon proteins assembly into trimers. This is Shutoff protein from Homo sapiens (Human).